The following is a 132-amino-acid chain: Aspartate 1-decarboxylase (132 aa).

The Schiff-base intermediate with substrate; via pyruvic acid role is filled by Ser-25. The residue at position 25 (Ser-25) is a Pyruvic acid (Ser). Thr-57 lines the substrate pocket. Tyr-58 acts as the Proton donor in catalysis. 73–75 (GAA) is a binding site for substrate.

This sequence belongs to the PanD family. Heterooctamer of four alpha and four beta subunits. Pyruvate is required as a cofactor. Is synthesized initially as an inactive proenzyme, which is activated by self-cleavage at a specific serine bond to produce a beta-subunit with a hydroxyl group at its C-terminus and an alpha-subunit with a pyruvoyl group at its N-terminus.

The protein localises to the cytoplasm. It catalyses the reaction L-aspartate + H(+) = beta-alanine + CO2. Its pathway is cofactor biosynthesis; (R)-pantothenate biosynthesis; beta-alanine from L-aspartate: step 1/1. Functionally, catalyzes the pyruvoyl-dependent decarboxylation of aspartate to produce beta-alanine. The sequence is that of Aspartate 1-decarboxylase from Pelotomaculum thermopropionicum (strain DSM 13744 / JCM 10971 / SI).